The following is a 189-amino-acid chain: Glycerol-3-phosphate acyltransferase (189 aa).

The next 5 membrane-spanning stretches (helical) occupy residues M1 to L21, K50 to A70, A81 to G101, M111 to F131, and L151 to V171.

The protein belongs to the PlsY family. In terms of assembly, probably interacts with PlsX.

It localises to the cell inner membrane. It catalyses the reaction an acyl phosphate + sn-glycerol 3-phosphate = a 1-acyl-sn-glycero-3-phosphate + phosphate. It participates in lipid metabolism; phospholipid metabolism. In terms of biological role, catalyzes the transfer of an acyl group from acyl-phosphate (acyl-PO(4)) to glycerol-3-phosphate (G3P) to form lysophosphatidic acid (LPA). This enzyme utilizes acyl-phosphate as fatty acyl donor, but not acyl-CoA or acyl-ACP. The protein is Glycerol-3-phosphate acyltransferase of Pseudomonas entomophila (strain L48).